The following is a 464-amino-acid chain: Sushi repeat-containing protein SRPX (464 aa).

An N-terminal signal peptide occupies residues 1 to 30 (MGSPAHRPALLLLLPPLLLLLLLRVPPSRS). S34 carries O-linked (Xyl...) (chondroitin sulfate) serine glycosylation. 5 disulfides stabilise this stretch: C57–C85, C69–C103, C89–C115, C120–C161, and C147–C174. 2 Sushi domains span residues 57 to 117 (CSPI…ICKQ) and 118 to 176 (KRCP…SCVD). An HYR domain is found at 177–259 (MEPPRIKCPS…TCKFRVKVRV (83 aa)). A Sushi 3 domain is found at 260-319 (KRCGKLNAPENGYMKCSSDGDNYGATCEFSCIGGYELQGSPARVCQSNLAWSGTEPTCAA). 2 disulfide bridges follow: C262-C304 and C290-C317.

As to expression, detected in fibroblasts (at protein level). Retina and heart; less in placenta, pancreas, lung, liver, skeletal muscle, kidney and brain.

It is found in the cell surface. Functionally, may be involved in phagocytosis during disk shedding, cell adhesion to cells other than the pigment epithelium or signal transduction. The chain is Sushi repeat-containing protein SRPX (SRPX) from Homo sapiens (Human).